Here is an 812-residue protein sequence, read N- to C-terminus: Lon protease (812 aa).

A Lon N-terminal domain is found at 22–215 (YAVLPLRDIV…KALSFMEAEI (194 aa)). Residue 367–374 (GPPGVGKT) participates in ATP binding. The region spanning 602-783 (EDQVGVVTGL…GEVLKHALVR (182 aa)) is the Lon proteolytic domain. Active-site residues include Ser-689 and Lys-732. Positions 787–812 (PIEWTEQENPTAVPPVEDEAGASLAH) are disordered.

The protein belongs to the peptidase S16 family. Homohexamer. Organized in a ring with a central cavity.

It localises to the cytoplasm. It catalyses the reaction Hydrolysis of proteins in presence of ATP.. ATP-dependent serine protease that mediates the selective degradation of mutant and abnormal proteins as well as certain short-lived regulatory proteins. Required for cellular homeostasis and for survival from DNA damage and developmental changes induced by stress. Degrades polypeptides processively to yield small peptide fragments that are 5 to 10 amino acids long. Binds to DNA in a double-stranded, site-specific manner. This Brucella melitensis biotype 1 (strain ATCC 23456 / CCUG 17765 / NCTC 10094 / 16M) protein is Lon protease.